A 76-amino-acid chain; its full sequence is Tautomerase PptA (76 aa).

The Proton acceptor; via imino nitrogen role is filled by proline 2.

This sequence belongs to the 4-oxalocrotonate tautomerase family. PptA subfamily. Homodimer.

The protein localises to the cytoplasm. In Cronobacter sakazakii (strain ATCC BAA-894) (Enterobacter sakazakii), this protein is Tautomerase PptA.